The primary structure comprises 126 residues: MNVNNPNQMTVTPVYNGCDSGEGPQSVRGYFDAVAGENVKYDLTYLADTQGFTGVQCIYIDNAENDGAFEIDVEETGQRIKCPAGKQGYFPLLVPGRAKFVARHLGSGKKSVPLFFLNFTIAQGVW.

The protein resides in the virion. Functionally, in association with P2 and trimeric P5, forms the spike complexes located at the 5-fold vertices of the capsid. Essential for viral infectivity. This Acinetobacter calcoaceticus (Arthrobacter siderocapsulatus) protein is Penton protein P31 (XXXI).